Reading from the N-terminus, the 407-residue chain is MTTSDPDLSGLETDVCVVGGGATALYGALLCARAGQSVVLVFSQPEFEAAGAGISPLLAPPTLGLLAASGIDEQLTAAGRKVLGVDDHGSTGMLSSWRYADHAGIARPYGLTVPTGTTVQALLAELRAQPRATVLTGEGVVSVEQDDERVVLGFERAAGQDGGVPARRRVAARYAVAADGRQSALRDLVGIRLEVSAFDRPAWLLVAPDVPGRESVLLVRHRAPRALFTIPTPGPSSAVVWAPDRDQEKQLEQGGPAELAEQIKEVDPELSEWLGTVGGRTSPVMRLGFSLWRAPSWRVGRVLLVGESVHGLHTLGGQGLNQSLQGAASAARAIGEALASGDPAAIEDYERVRRPHVERLQDLQWNLQALGYGTAPAVKGAHEDFIDVMTALPPELVAQLDGSDTRA.

In terms of assembly, does not interact with AsuE2, suggesting a possible transient interaction between the two enzymes instead of formation of a stable complex. FMN is required as a cofactor. Requires FAD as cofactor. It depends on riboflavin as a cofactor.

It catalyses the reaction protoasukamycin + NADH + O2 + H(+) = 4-hydroxyprotoasukamycin + NAD(+) + H2O. The protein operates within antibiotic biosynthesis. When flavin concentration is low, activity is enhanced by the presence of the NADH-dependent flavin reductase AsuE2. In the presence of abundant flavin, activity of AsuE1 is not affected by AsuE2. In terms of biological role, involved in the biosynthesis of the antibiotic asukamycin. Catalyzes the conversion of protoasukamycin to 4-hydroxyprotoasukamycin. Can also convert some protoasukamycin derivatives into their corresponding 4-hydroxyprotoasukamycin derivatives. Can also use NADPH, but catalytic efficiency is 50-fold higher with NADH. This is Protoasukamycin 4-monooxygenase from Streptomyces nodosus subsp. asukaensis.